The sequence spans 397 residues: 2-acyl-1-lysophosphatidylinositol acyltransferase (397 aa).

Residues 112-117 (HQIYTD) carry the HXXXXD motif motif.

This sequence belongs to the 1-acyl-sn-glycerol-3-phosphate acyltransferase family.

It is found in the lipid droplet. The catalysed reaction is 1-heptadecanoyl-sn-glycero-3-phosphate + octadecanoyl-CoA = 1-heptadecanoyl-2-octadecanoyl-sn-glycero-3-phosphate + CoA. It catalyses the reaction 1-heptadecanoyl-sn-glycero-3-phosphate + tetradecanoyl-CoA = 1-heptadecanoyl-2-tetradecanoyl-sn-glycero-3-phosphate + CoA. The enzyme catalyses 1-heptadecanoyl-sn-glycero-3-phosphate + hexadecanoyl-CoA = 1-heptadecanoyl-2-hexadecanoyl-sn-glycero-3-phosphate + CoA. Its function is as follows. Acyltransferase with lysophosphatidic acid acyltransferase (LPAAT) activity. Fatty acyl substrates include 18:0-acyl-CoA, 16:0-acyl-CoA, 17:0-acyl-CoA and 14:0-acyl-CoA. Responsible for the acyl-CoA-dependent introduction of saturated very long chain fatty acids (VLCFAs) into phosphatidylinositol, transferring saturated FAs with 18 to 26 carbon atoms. Responsible for the incorporation of stearate into phosphatidylinositol. Overexpression has an effect on chromosome stability. Regulates phosphorylation and expression of glycerol-3-phosphate acyltransferase SCT1. In Saccharomyces cerevisiae (strain ATCC 204508 / S288c) (Baker's yeast), this protein is 2-acyl-1-lysophosphatidylinositol acyltransferase.